We begin with the raw amino-acid sequence, 404 residues long: Diaminopropionate ammonia-lyase (404 aa).

Position 78 is an N6-(pyridoxal phosphate)lysine (K78).

It belongs to the diaminopropionate ammonia-lyase family. Homodimer. Requires pyridoxal 5'-phosphate as cofactor.

The catalysed reaction is (S)-2,3-diaminopropanoate + H2O + H(+) = pyruvate + 2 NH4(+). It catalyses the reaction (R)-2,3-diaminopropanoate + H2O + H(+) = pyruvate + 2 NH4(+). With respect to regulation, competitively inhibited by L- and D-alanine. In terms of biological role, catalyzes the alpha,beta-elimination reaction of both L- and D-alpha,beta-diaminopropionate (DAP) to form pyruvate and ammonia. In vitro L- and D-isomers of serine are also degraded, though slowly; it is the only serine dehydratase which can eliminate an amino group at the beta-carbon position. In vivo L-, D- and a mixure of DL-DAP allow growth. DL-DAP is toxic in the absence of this enzyme, it may inhibit enzymes involved in the synthesis of pyruvate and aspartate, as well as amino acids derived from them. In Salmonella typhimurium (strain LT2 / SGSC1412 / ATCC 700720), this protein is Diaminopropionate ammonia-lyase (dpaL).